Consider the following 1525-residue polypeptide: Dicer-like protein 1 (1525 aa).

Residues 37-52 are compositionally biased toward acidic residues; the sequence is DLQEDDGSSDESDNDE. Residues 37–65 are disordered; it reads DLQEDDGSSDESDNDEREDHSKTGVSQQR. The Helicase ATP-binding domain maps to 124-305; sequence LFERAKVQNT…DEATRLEKLL (182 aa). Position 137–144 (137–144) interacts with ATP; the sequence is LDTGSGKT. Positions 250–253 match the DEAH box motif; it reads DEAH. Positions 439-605 constitute a Helicase C-terminal domain; the sequence is QLSPKVQVLR…SFCRTLPEDR (167 aa). The region spanning 641–731 is the Dicer dsRNA-binding fold domain; sequence ATAILARYAS…NSIYHRRLPA (91 aa). One can recognise a PAZ domain in the interval 881 to 1009; it reads ESLTYVRDND…ICIEPLKVSA (129 aa). RNase III domains lie at 1032 to 1192 and 1243 to 1394; these read LISL…LSGG and SRKI…VDSD. The Mg(2+) site is built by Glu-1283, Asp-1380, and Glu-1383. In terms of domain architecture, DRBM spans 1428 to 1496; the sequence is TFLHNRLTNE…SEKALAVLDE (69 aa). The Zn(2+) site is built by Cys-1440, His-1467, Cys-1508, and Cys-1510.

The protein belongs to the helicase family. Dicer subfamily. Mg(2+) is required as a cofactor. Requires Mn(2+) as cofactor.

Its function is as follows. Dicer-like endonuclease involved in cleaving double-stranded RNA in the RNA interference (RNAi) pathway. Produces 21 to 25 bp dsRNAs (siRNAs) which target the selective destruction of homologous RNAs leading to sequence-specific suppression of gene expression, called post-transcriptional gene silencing (PTGS). Part of a broad host defense response against viral infection and transposons. In Aspergillus niger (strain ATCC MYA-4892 / CBS 513.88 / FGSC A1513), this protein is Dicer-like protein 1 (dcl1).